Reading from the N-terminus, the 505-residue chain is Lysine--tRNA ligase (505 aa).

The Mg(2+) site is built by E415 and E422.

This sequence belongs to the class-II aminoacyl-tRNA synthetase family. As to quaternary structure, homodimer. Mg(2+) is required as a cofactor.

The protein localises to the cytoplasm. The enzyme catalyses tRNA(Lys) + L-lysine + ATP = L-lysyl-tRNA(Lys) + AMP + diphosphate. This Edwardsiella ictaluri (strain 93-146) protein is Lysine--tRNA ligase.